The sequence spans 1059 residues: Zinc finger protein 658 (1059 aa).

The KRAB domain maps to 8–79 (VSFQDVTVEF…EDEFLNQRYP (72 aa)). A Glycyl lysine isopeptide (Lys-Gly) (interchain with G-Cter in SUMO2) cross-link involves residue Lys178. Residues 325-347 (FESNKCEENFSQSSAHIVHQKTQ) form a C2H2-type 1; degenerate zinc finger. The C2H2-type 2; degenerate zinc-finger motif lies at 352-375 (FGEHNECTDALYQKLDFTAHQRIH). The C2H2-type 3; degenerate zinc finger occupies 381–406 (YLSDEHGKCRKSFYRKAHLIQHQRPH). Residues 412–434 (YQYEECAKSFCSSSHPIQHPGTY) form a C2H2-type 4; degenerate zinc finger. 14 C2H2-type zinc fingers span residues 440-462 (YECN…LRIH), 518-540 (YECI…QRIH), 546-568 (YECV…QRVH), 574-596 (YECN…QRIH), 602-624 (YECS…HRIH), 630-652 (YECN…QRIH), 658-680 (YECN…QRIH), 686-708 (YECS…QRIH), 714-736 (YECN…QNIH), 742-764 (YECS…RRIH), 770-792 (YECS…ERIH), 798-820 (YECN…QRIH), 826-848 (YECN…QRIH), and 854-876 (YECN…HRIH). A C2H2-type 19; degenerate zinc finger spans residues 882–904 (YECNDCGKTFSKTSHLRAHLRTR). C2H2-type zinc fingers lie at residues 910–932 (YECS…QRVH), 938–960 (YECN…QRIH), 966–988 (YECN…QRIH), 994–1016 (YECN…QRIH), and 1022–1045 (YECD…TRMH).

This sequence belongs to the krueppel C2H2-type zinc-finger protein family.

It localises to the nucleus. In terms of biological role, mediates transcriptional repression in response to zinc. Represses several genes, including SLC30A5, SLC30A10 and CBWD1, by binding to the zinc transcriptional regulatory element (ZTRE) (5'-C[AC]C[TAG]CC[TC]-N(0-50)-[GA]G[ATC]G[TG]G-3') found in the promoter region. May play a role in the control of ribosome biogenesis, regulating predominantly rRNA levels, as well as those of several ribosomal proteins, thus coordinating this highly zinc-demanding process with the available zinc supply. This is Zinc finger protein 658 (ZNF658) from Homo sapiens (Human).